The following is a 561-amino-acid chain: Glucose-6-phosphate isomerase (561 aa).

Residues 171–172 (GS), 222–227 (SKTFTT), Q366, E370, H401, and K525 each bind D-glucose 6-phosphate. The Proton donor role is filled by E370. Active-site residues include H401 and K525.

It belongs to the GPI family. In terms of assembly, homodimer.

It localises to the cytoplasm. The protein resides in the cytosol. The enzyme catalyses alpha-D-glucose 6-phosphate = beta-D-fructose 6-phosphate. The protein operates within carbohydrate degradation; glycolysis; D-glyceraldehyde 3-phosphate and glycerone phosphate from D-glucose: step 2/4. Functionally, in the cytoplasm, catalyzes the conversion of glucose-6-phosphate to fructose-6-phosphate, the second step in glycolysis, and the reverse reaction during gluconeogenesis. In Neurospora crassa (strain ATCC 24698 / 74-OR23-1A / CBS 708.71 / DSM 1257 / FGSC 987), this protein is Glucose-6-phosphate isomerase (pgi-1).